The primary structure comprises 121 residues: UPF0344 protein BC_1150 (121 aa).

4 helical membrane-spanning segments follow: residues 6–26, 38–58, 65–85, and 92–112; these read ITAWALGLILFFVAYSLYSAG, LMYIIIIVTGFMLYMSIVKTA, WYGLKMLAGILVIGGMEMVLV, and PTGAVWGLFIVALVAVFYLGL.

The protein belongs to the UPF0344 family.

The protein resides in the cell membrane. The protein is UPF0344 protein BC_1150 of Bacillus cereus (strain ATCC 14579 / DSM 31 / CCUG 7414 / JCM 2152 / NBRC 15305 / NCIMB 9373 / NCTC 2599 / NRRL B-3711).